A 633-amino-acid polypeptide reads, in one-letter code: Pentatricopeptide repeat-containing protein At3g24000, mitochondrial (633 aa).

The transit peptide at 1 to 63 (MALRFPPRLL…SYIPADRRFY (63 aa)) directs the protein to the mitochondrion. PPR repeat units follow at residues 94 to 124 (DIVM…MPQR), 125 to 159 (DFVT…GYSP), 160 to 194 (NEFT…GFDS), 195 to 225 (NVHV…LESR), 226 to 260 (NDVS…GFRP), 261 to 295 (SHFS…GEKL), 296 to 326 (VAFA…LAKR), 327 to 361 (DVVS…GIRP), 362 to 396 (NEIS…GIVP), and 397 to 431 (EAWH…PTAA). Residues 432-507 (IWKALLNACR…EPACSWVEIE (76 aa)) form a type E motif region. The type E(+) motif stretch occupies residues 508-538 (NAIHMFVANDERHPQREEIARKWEEVLAKIK). Residues 539–633 (ELGYVPDTSH…DGNCSCKDYW (95 aa)) are type DYW motif.

It belongs to the PPR family. PCMP-H subfamily.

The protein localises to the mitochondrion. The protein is Pentatricopeptide repeat-containing protein At3g24000, mitochondrial (PCMP-H87) of Arabidopsis thaliana (Mouse-ear cress).